A 508-amino-acid chain; its full sequence is Pentatricopeptide repeat-containing protein At3g04130, mitochondrial (508 aa).

The N-terminal 74 residues, methionine 1–leucine 74, are a transit peptide targeting the mitochondrion. 10 PPR repeats span residues serine 120–aspartate 150, threonine 154–lysine 188, asparagine 189–histidine 219, asparagine 223–proline 257, cysteine 258–proline 292, asparagine 293–proline 327, aspartate 328–isoleucine 363, asparagine 364–asparagine 398, aspartate 400–serine 434, and aspartate 436–proline 470.

Belongs to the PPR family. P subfamily.

It localises to the mitochondrion. In Arabidopsis thaliana (Mouse-ear cress), this protein is Pentatricopeptide repeat-containing protein At3g04130, mitochondrial.